The chain runs to 268 residues: GTP cyclohydrolase FolE2 (268 aa).

Belongs to the GTP cyclohydrolase IV family.

The catalysed reaction is GTP + H2O = 7,8-dihydroneopterin 3'-triphosphate + formate + H(+). The protein operates within cofactor biosynthesis; 7,8-dihydroneopterin triphosphate biosynthesis; 7,8-dihydroneopterin triphosphate from GTP: step 1/1. Converts GTP to 7,8-dihydroneopterin triphosphate. This is GTP cyclohydrolase FolE2 from Paraburkholderia xenovorans (strain LB400).